The following is a 428-amino-acid chain: Isocitrate lyase 1 (428 aa).

91–93 (SGW) is a binding site for substrate. Residue Asp153 participates in Mg(2+) binding. Catalysis depends on Cys191, which acts as the Proton acceptor. Substrate-binding positions include 192 to 193 (GH), Arg228, 313 to 317 (NCSPS), and Thr347.

This sequence belongs to the isocitrate lyase/PEP mutase superfamily. Isocitrate lyase family. In terms of assembly, homotetramer. Mg(2+) is required as a cofactor.

The catalysed reaction is D-threo-isocitrate = glyoxylate + succinate. It catalyses the reaction (2S,3R)-3-hydroxybutane-1,2,3-tricarboxylate = pyruvate + succinate. Its pathway is carbohydrate metabolism; glyoxylate cycle; (S)-malate from isocitrate: step 1/2. Its function is as follows. Involved in the persistence and virulence of M.tuberculosis. Catalyzes the reversible formation of succinate and glyoxylate from isocitrate, a key step of the glyoxylate cycle, which operates as an anaplerotic route for replenishing the tricarboxylic acid cycle during growth on fatty acid substrates. It also catalyzes the formation of pyruvate and succinate from 2-methylisocitrate, a key step in the methylcitrate cycle (propionate degradation route). The polypeptide is Isocitrate lyase 1 (icl1) (Mycobacterium tuberculosis (strain ATCC 35801 / TMC 107 / Erdman)).